The primary structure comprises 292 residues: MQHLIDKANTLMEALPYIRRFSGKTIVIKYGGHAMADEALKESFALDVIMLKSLGINPVVVHGGGPQINETLKRYGIVSEFVKGMRVTDAATMQVVEMVLTGQVNKEVVGYLNQHGGRAVGLSGKDGNLLLCRKLLQEVRQDDGTVESVDIGFVGDVVKVNQELIQTLEHGKFIPVIAPVGVGEQGESYNVNADLVAGRVAGALRAEKLILLTDVAGVKDKAGALLSSIRLDTVPGLIDDGVITGGMIPKVTCCVDAIEEGVRKASIIDGRVLHAVLLEIFTDVGVGTEIHR.

Substrate is bound by residues 64-65, Arg-86, and Asn-190; that span reads GG.

It belongs to the acetylglutamate kinase family. ArgB subfamily.

It is found in the cytoplasm. The catalysed reaction is N-acetyl-L-glutamate + ATP = N-acetyl-L-glutamyl 5-phosphate + ADP. It participates in amino-acid biosynthesis; L-arginine biosynthesis; N(2)-acetyl-L-ornithine from L-glutamate: step 2/4. In terms of biological role, catalyzes the ATP-dependent phosphorylation of N-acetyl-L-glutamate. The chain is Acetylglutamate kinase from Geobacter sulfurreducens (strain ATCC 51573 / DSM 12127 / PCA).